Reading from the N-terminus, the 247-residue chain is uncharacterized protein (247 aa).

A coiled-coil region spans residues 200–225 (SGKYSELKTKVNDIENDLRTLSSNTN).

This is an uncharacterized protein from Acanthamoeba polyphaga (Amoeba).